The following is a 232-amino-acid chain: Purine nucleoside phosphorylase DeoD-type (232 aa).

Residue His-4 participates in a purine D-ribonucleoside binding. Phosphate is bound by residues Gly-20, Arg-24, Arg-43, and 87–90; that span reads RVGS. Residues Glu-162, 178–180, and 202–203 contribute to the a purine D-ribonucleoside site; these read EME and SD. The Proton donor role is filled by Asp-203.

The protein belongs to the PNP/UDP phosphorylase family. Homohexamer; trimer of homodimers.

The enzyme catalyses a purine D-ribonucleoside + phosphate = a purine nucleobase + alpha-D-ribose 1-phosphate. It catalyses the reaction a purine 2'-deoxy-D-ribonucleoside + phosphate = a purine nucleobase + 2-deoxy-alpha-D-ribose 1-phosphate. In terms of biological role, catalyzes the reversible phosphorolytic breakdown of the N-glycosidic bond in the beta-(deoxy)ribonucleoside molecules, with the formation of the corresponding free purine bases and pentose-1-phosphate. In Bacillus velezensis (strain DSM 23117 / BGSC 10A6 / LMG 26770 / FZB42) (Bacillus amyloliquefaciens subsp. plantarum), this protein is Purine nucleoside phosphorylase DeoD-type.